A 560-amino-acid chain; its full sequence is MTTSWSDRLQNAADVPANMDKHALKKYRREAYHRVFVNRSLAMEKIKCFGFDMDYTLAVYKSPEYESLGFELTVERLVSIGYPQELLSFAYDSTFPTRGLVFDTLYGNLLKVDAYGNLLVCAHGFNFIRGPETREQYPNKFIQRDDTERFYILNTLFNLPETYLLACLVDFFTNCPRYTSCDTGFKDGDLFMSYRSMFQDVRDAVDWVHYKGSLKEKTVENLEKYVVKDGKLPLLLSRMKEVGKVFLATNSDYKYTDKIMTYLFDFPHGPKPGSSHRPWQSYFDLILVDARKPLFFGEGTVLRQVDTKTGKLKIGTYTGPLQHGIVYSGGSSDTICDLLGAKGKDILYIGDHIFGDILKSKKRQGWRTFLVIPELAQELHVWTDKSSLFEELQSLDIFLAELYKHLDSSSNERPDISSIQRRIKKVTHDMDMCYGMMGSLFRSGSRQTLFASQVMRYADLYAASFINLLYYPFSYLFRAAHVLMPHESTVEHTHVDINEMESPLATRNRTSVDFKDTDYKRHQLTRSISEIKPPNLFPLAPQEITHCHDEDDDEEEEEEE.

Asp-52 (nucleophile) is an active-site residue. Asp-52 and Asp-54 together coordinate IMP. Mg(2+) contacts are provided by Asp-52 and Asp-54. Asp-54 acts as the Proton donor in catalysis. 2 residues coordinate ATP: Arg-144 and Asn-154. IMP-binding residues include Arg-202, Asp-206, Lys-215, Thr-249, Asn-250, Ser-251, and Lys-292. Asp-351 is a Mg(2+) binding site. The residue at position 418 (Ser-418) is a Phosphoserine. Residues Gln-453 and Arg-456 each coordinate ATP. 3 positions are modified to phosphoserine: Ser-502, Ser-511, and Ser-527. The segment at 541-560 is disordered; that stretch reads PQEITHCHDEDDDEEEEEEE. The tract at residues 548-560 is required for tetramer assembly; the sequence is HDEDDDEEEEEEE. A compositionally biased stretch (acidic residues) spans 550–560; the sequence is EDDDEEEEEEE.

The protein belongs to the 5'(3')-deoxyribonucleotidase family. Homotetramer. It depends on Mg(2+) as a cofactor.

It localises to the cytoplasm. The protein resides in the cytosol. It carries out the reaction a ribonucleoside 5'-phosphate + H2O = a ribonucleoside + phosphate. The enzyme catalyses a 2'-deoxyribonucleoside + a ribonucleoside 5'-phosphate = a ribonucleoside + a 2'-deoxyribonucleoside 5'-phosphate. It catalyses the reaction IMP + H2O = inosine + phosphate. The catalysed reaction is GMP + H2O = guanosine + phosphate. It carries out the reaction dGMP + H2O = 2'-deoxyguanosine + phosphate. The enzyme catalyses dIMP + H2O = 2'-deoxyinosine + phosphate. It catalyses the reaction XMP + H2O = xanthosine + phosphate. The catalysed reaction is inosine + GMP = guanosine + IMP. It carries out the reaction dGMP + inosine = 2'-deoxyguanosine + IMP. The enzyme catalyses dIMP + inosine = 2'-deoxyinosine + IMP. It catalyses the reaction inosine + UMP = uridine + IMP. The catalysed reaction is inosine + CMP = cytidine + IMP. It carries out the reaction inosine + AMP = IMP + adenosine. Allosterically activated by various compounds including ATP, 2,3-BPG/2,3-Bisphosphoglyceric acid and Ap4A/P1,P4-bis(5'-adenosyl) tetraphosphate. Binding of an allosteric activator is a prerequisiste to magnesium and substrate binding. Inhibited by inorganic phosphate. Broad specificity cytosolic 5'-nucleotidase that catalyzes the dephosphorylation of 6-hydroxypurine nucleoside 5'-monophosphates. In addition, possesses a phosphotransferase activity by which it can transfer a phosphate from a donor nucleoside monophosphate to an acceptor nucleoside, preferably inosine, deoxyinosine and guanosine. Has the highest activities for IMP and GMP followed by dIMP, dGMP and XMP. Could also catalyze the transfer of phosphates from pyrimidine monophosphates but with lower efficiency. Through these activities regulates the purine nucleoside/nucleotide pools within the cell. This is Cytosolic purine 5'-nucleotidase from Mus musculus (Mouse).